We begin with the raw amino-acid sequence, 167 residues long: UPF0114 protein in repA1-repA2 intergenic region (167 aa).

3 helical membrane passes run 15–35 (LMFP…LKFF), 53–73 (LVLI…LVMV), and 136–156 (IILC…MAYI).

It belongs to the UPF0114 family.

It localises to the cell membrane. The protein is UPF0114 protein in repA1-repA2 intergenic region of Buchnera aphidicola subsp. Pterocomma populeum.